A 206-amino-acid polypeptide reads, in one-letter code: Small ribosomal subunit protein uS4 (206 aa).

The S4 RNA-binding domain occupies 96–159 (TRLDNVVYRM…KKQARISASL (64 aa)).

This sequence belongs to the universal ribosomal protein uS4 family. In terms of assembly, part of the 30S ribosomal subunit. Contacts protein S5. The interaction surface between S4 and S5 is involved in control of translational fidelity.

Functionally, one of the primary rRNA binding proteins, it binds directly to 16S rRNA where it nucleates assembly of the body of the 30S subunit. Its function is as follows. With S5 and S12 plays an important role in translational accuracy. In Shewanella violacea, this protein is Small ribosomal subunit protein uS4.